We begin with the raw amino-acid sequence, 292 residues long: 6-phospho-5-dehydro-2-deoxy-D-gluconate aldolase (292 aa).

The Proton donor role is filled by aspartate 85. Zn(2+)-binding residues include histidine 86 and histidine 180. Residue glycine 181 coordinates dihydroxyacetone phosphate. Histidine 208 contacts Zn(2+). Residues 209 to 211 (GAS) and 230 to 233 (NINT) contribute to the dihydroxyacetone phosphate site. Residue threonine 233 is modified to Phosphothreonine.

This sequence belongs to the class II fructose-bisphosphate aldolase family. IolJ subfamily. It depends on Zn(2+) as a cofactor.

It carries out the reaction 6-phospho-5-dehydro-2-deoxy-D-gluconate = 3-oxopropanoate + dihydroxyacetone phosphate. It participates in polyol metabolism; myo-inositol degradation into acetyl-CoA; acetyl-CoA from myo-inositol: step 6/7. Its function is as follows. Produces dihydroxyacetone phosphate (DHAP or glycerone phosphate) and malonic semialdehyde (MSA or 3-oxopropanoate) from 6-phospho-5-dehydro-2-deoxy-D-gluconate (DKGP). The protein is 6-phospho-5-dehydro-2-deoxy-D-gluconate aldolase (iolJ) of Bacillus licheniformis (strain ATCC 14580 / DSM 13 / JCM 2505 / CCUG 7422 / NBRC 12200 / NCIMB 9375 / NCTC 10341 / NRRL NRS-1264 / Gibson 46).